The following is a 429-amino-acid chain: Enolase (429 aa).

Residue Q162 participates in (2R)-2-phosphoglycerate binding. E204 (proton donor) is an active-site residue. Mg(2+) is bound by residues D241, E283, and D310. The (2R)-2-phosphoglycerate site is built by K335, R364, S365, and K386. Residue K335 is the Proton acceptor of the active site.

This sequence belongs to the enolase family. It depends on Mg(2+) as a cofactor.

The protein resides in the cytoplasm. The protein localises to the secreted. It is found in the cell surface. It carries out the reaction (2R)-2-phosphoglycerate = phosphoenolpyruvate + H2O. It functions in the pathway carbohydrate degradation; glycolysis; pyruvate from D-glyceraldehyde 3-phosphate: step 4/5. In terms of biological role, catalyzes the reversible conversion of 2-phosphoglycerate (2-PG) into phosphoenolpyruvate (PEP). It is essential for the degradation of carbohydrates via glycolysis. This chain is Enolase, found in Mycobacterium tuberculosis (strain ATCC 25177 / H37Ra).